Consider the following 495-residue polypeptide: L-arabinose isomerase (495 aa).

Positions 305, 332, 349, and 448 each coordinate Mn(2+).

The protein belongs to the arabinose isomerase family. Mn(2+) is required as a cofactor.

The enzyme catalyses beta-L-arabinopyranose = L-ribulose. It functions in the pathway carbohydrate degradation; L-arabinose degradation via L-ribulose; D-xylulose 5-phosphate from L-arabinose (bacterial route): step 1/3. Its function is as follows. Catalyzes the conversion of L-arabinose to L-ribulose. This Mannheimia succiniciproducens (strain KCTC 0769BP / MBEL55E) protein is L-arabinose isomerase.